The sequence spans 680 residues: UvrABC system protein B (680 aa).

The Helicase ATP-binding domain maps to Ala-27–Glu-422. Position 40-47 (Gly-40–Thr-47) interacts with ATP. The short motif at Tyr-93 to Ile-116 is the Beta-hairpin element. Positions Gln-443–Ser-609 constitute a Helicase C-terminal domain. The region spanning Pro-641–Arg-676 is the UVR domain.

It belongs to the UvrB family. As to quaternary structure, forms a heterotetramer with UvrA during the search for lesions. Interacts with UvrC in an incision complex.

It is found in the cytoplasm. In terms of biological role, the UvrABC repair system catalyzes the recognition and processing of DNA lesions. A damage recognition complex composed of 2 UvrA and 2 UvrB subunits scans DNA for abnormalities. Upon binding of the UvrA(2)B(2) complex to a putative damaged site, the DNA wraps around one UvrB monomer. DNA wrap is dependent on ATP binding by UvrB and probably causes local melting of the DNA helix, facilitating insertion of UvrB beta-hairpin between the DNA strands. Then UvrB probes one DNA strand for the presence of a lesion. If a lesion is found the UvrA subunits dissociate and the UvrB-DNA preincision complex is formed. This complex is subsequently bound by UvrC and the second UvrB is released. If no lesion is found, the DNA wraps around the other UvrB subunit that will check the other stand for damage. The polypeptide is UvrABC system protein B (Gloeobacter violaceus (strain ATCC 29082 / PCC 7421)).